A 181-amino-acid polypeptide reads, in one-letter code: Malignant T-cell-amplified sequence 1-B (181 aa).

One can recognise a PUA domain in the interval 92 to 171; that stretch reads LPHQQVDKGA…IGIENIHYLN (80 aa).

It belongs to the MCTS1 family.

It is found in the cytoplasm. Its function is as follows. Plays a role as translation enhancer and involved in cell cycle regulation. In Xenopus laevis (African clawed frog), this protein is Malignant T-cell-amplified sequence 1-B (mcts1-b).